The sequence spans 257 residues: Zinc uptake system ATP-binding protein ZurA (257 aa).

Positions 5–241 (IEVNNVSYHY…ADRELEILAE (237 aa)) constitute an ABC transporter domain. ATP is bound at residue 37-44 (GPNGSGKS).

Belongs to the ABC transporter superfamily.

Its function is as follows. Involved in a zinc uptake transport system. This Listeria monocytogenes serovar 1/2a (strain ATCC BAA-679 / EGD-e) protein is Zinc uptake system ATP-binding protein ZurA (zurA).